The following is a 234-amino-acid chain: Orotidine 5'-phosphate decarboxylase (234 aa).

Residues aspartate 10, lysine 31, 58-67, threonine 121, arginine 183, glutamine 192, glycine 212, and arginine 213 each bind substrate; that span reads DLKLHDIPNT. The active-site Proton donor is the lysine 60.

The protein belongs to the OMP decarboxylase family. Type 1 subfamily. In terms of assembly, homodimer.

The enzyme catalyses orotidine 5'-phosphate + H(+) = UMP + CO2. It participates in pyrimidine metabolism; UMP biosynthesis via de novo pathway; UMP from orotate: step 2/2. Catalyzes the decarboxylation of orotidine 5'-monophosphate (OMP) to uridine 5'-monophosphate (UMP). The sequence is that of Orotidine 5'-phosphate decarboxylase from Lysinibacillus sphaericus (strain C3-41).